The primary structure comprises 341 residues: ATPase GET3 (341 aa).

34–41 is an ATP binding site; sequence KGGVGKTT. The active site involves D63. ATP-binding residues include E245 and N272. 2 residues coordinate Zn(2+): C283 and C286.

The protein belongs to the arsA ATPase family. In terms of assembly, homodimer.

It is found in the cytoplasm. The protein resides in the endoplasmic reticulum. In terms of biological role, ATPase required for the post-translational delivery of tail-anchored (TA) proteins to the endoplasmic reticulum. Recognizes and selectively binds the transmembrane domain of TA proteins in the cytosol. This complex then targets to the endoplasmic reticulum by membrane-bound receptors, where the tail-anchored protein is released for insertion. This process is regulated by ATP binding and hydrolysis. ATP binding drives the homodimer towards the closed dimer state, facilitating recognition of newly synthesized TA membrane proteins. ATP hydrolysis is required for insertion. Subsequently, the homodimer reverts towards the open dimer state, lowering its affinity for the membrane-bound receptor, and returning it to the cytosol to initiate a new round of targeting. This chain is ATPase GET3, found in Ajellomyces capsulatus (strain G186AR / H82 / ATCC MYA-2454 / RMSCC 2432) (Darling's disease fungus).